Here is a 411-residue protein sequence, read N- to C-terminus: AT-hook motif nuclear-localized protein 14 (411 aa).

Disordered regions lie at residues 1–32, 54–164, 289–348, and 366–411; these read MDPNESHHHHQQQQLHHLHQQQQQQQQQQRLT, ASTG…LGSV, KDAA…HQAG, and THSR…QIPD. Positions 7 to 19 are enriched in basic residues; that stretch reads HHHHQQQQLHHLH. Low complexity predominate over residues 20–29; the sequence is QQQQQQQQQQ. Residues 54–66 are compositionally biased toward polar residues; it reads ASTGNAVPSSNNG. The Bipartite nuclear localization signal motif lies at 105 to 113; it reads KRKRGRPRK. Positions 105–117 form a DNA-binding region, a.T hook; sequence KRKRGRPRKYVTP. Composition is skewed to low complexity over residues 120 to 135 and 144 to 159; these read ALAAKKLASSASSSSA and VTGGTVSTNSGSSKKS. Residues 165-305 form the PPC domain; that stretch reads GKTGQCFTPH…GKGDASNSGS (141 aa). The span at 306–315 shows a compositional bias: polar residues; that stretch reads RLTSPVSSGQ. Gly residues predominate over residues 374–390; it reads RGGGNSGHDGRGGGGYD.

It is found in the nucleus. In terms of biological role, transcription factor that specifically binds AT-rich DNA sequences related to the nuclear matrix attachment regions (MARs). The chain is AT-hook motif nuclear-localized protein 14 from Arabidopsis thaliana (Mouse-ear cress).